A 436-amino-acid polypeptide reads, in one-letter code: Trigger factor (436 aa).

The PPIase FKBP-type domain maps to E161–P246.

This sequence belongs to the FKBP-type PPIase family. Tig subfamily.

The protein resides in the cytoplasm. It catalyses the reaction [protein]-peptidylproline (omega=180) = [protein]-peptidylproline (omega=0). Functionally, involved in protein export. Acts as a chaperone by maintaining the newly synthesized protein in an open conformation. Functions as a peptidyl-prolyl cis-trans isomerase. This Pseudomonas fluorescens (strain Pf0-1) protein is Trigger factor.